A 389-amino-acid chain; its full sequence is Nucleic acid dioxygenase ALKBH1 (389 aa).

Residues 86-389 (SKWQAYGLKG…VKRARINPDS (304 aa)) are tRNA-binding. Substrate contacts are provided by residues Trp-144 and 175 to 177 (YHY). Residues 208–347 (GFEDFRAEAG…RVNMTVRQVL (140 aa)) form the Fe2OG dioxygenase domain. 220 to 222 (NYY) is a 2-oxoglutarate binding site. His-231, Asp-233, and His-287 together coordinate Fe cation. Asp-233 provides a ligand contact to substrate. 2-oxoglutarate is bound at residue 338–344 (RVNMTVR).

It belongs to the alkB family. As to quaternary structure, monomer. Interacts with DNAJB6. Requires Fe(2+) as cofactor. Ubiquitous.

The protein localises to the nucleus. Its subcellular location is the mitochondrion. It carries out the reaction 2'-deoxyribonucleotide-(2'-deoxyribose 5'-phosphate)-2'-deoxyribonucleotide-DNA = a 3'-end 2'-deoxyribonucleotide-(2,3-dehydro-2,3-deoxyribose 5'-phosphate)-DNA + a 5'-end 5'-phospho-2'-deoxyribonucleoside-DNA + H(+). The catalysed reaction is a methylated nucleobase within DNA + 2-oxoglutarate + O2 = a nucleobase within DNA + formaldehyde + succinate + CO2. It catalyses the reaction an N(6)-methyl-2'-deoxyadenosine in DNA + 2-oxoglutarate + O2 = a 2'-deoxyadenosine in DNA + formaldehyde + succinate + CO2. The enzyme catalyses an N(1)-methyladenosine in tRNA + 2-oxoglutarate + O2 = an adenosine in tRNA + formaldehyde + succinate + CO2. It carries out the reaction 5-methylcytidine(34) in mitochondrial tRNA(Met) + 2 2-oxoglutarate + 2 O2 = 5-formylcytidine(34) in mitochondrial tRNA(Met) + 2 succinate + 2 CO2 + H2O. The catalysed reaction is an N(3)-methylcytidine in mRNA + 2-oxoglutarate + O2 = a cytidine in mRNA + formaldehyde + succinate + CO2. It catalyses the reaction N(1)-methyladenosine(58) in tRNA + 2-oxoglutarate + O2 = adenosine(58) in tRNA + formaldehyde + succinate + CO2. In terms of biological role, dioxygenase that acts on nucleic acids, such as DNA and tRNA. Requires molecular oxygen, alpha-ketoglutarate and iron. A number of activities have been described for this dioxygenase, but recent results suggest that it mainly acts on tRNAs and mediates their demethylation or oxidation depending on the context and subcellular compartment. Mainly acts as a tRNA demethylase by removing N(1)-methyladenine from various tRNAs, with a preference for N(1)-methyladenine at position 58 (m1A58) present on a stem loop structure of tRNAs. Acts as a regulator of translation initiation and elongation in response to glucose deprivation: regulates both translation initiation, by mediating demethylation of tRNA(Met), and translation elongation, N(1)-methyladenine-containing tRNAs being preferentially recruited to polysomes to promote translation elongation. In mitochondrion, specifically interacts with mt-tRNA(Met) and mediates oxidation of mt-tRNA(Met) methylated at cytosine(34) to form 5-formylcytosine (f(5)c) at this position. mt-tRNA(Met) containing the f(5)c modification at the wobble position enables recognition of the AUA codon in addition to the AUG codon, expanding codon recognition in mitochondrial translation. Specifically demethylates DNA methylated on the 6th position of adenine (N(6)-methyladenosine) DNA. N(6)-methyladenosine (m6A) DNA is present at some L1 elements in embryonic stem cells and probably promotes their silencing. Demethylates mRNAs containing N(3)-methylcytidine modification. Also able to repair alkylated single-stranded DNA by oxidative demethylation, but with low activity. Also has DNA lyase activity and introduces double-stranded breaks at abasic sites: cleaves both single-stranded DNA and double-stranded DNA at abasic sites, with the greatest activity towards double-stranded DNA with two abasic sites. DNA lyase activity does not require alpha-ketoglutarate and iron and leads to the formation of an irreversible covalent protein-DNA adduct with the 5' DNA product. DNA lyase activity is not required during base excision repair and class switch recombination of the immunoglobulin heavy chain during B lymphocyte activation. May play a role in placental trophoblast lineage differentiation. The chain is Nucleic acid dioxygenase ALKBH1 from Homo sapiens (Human).